Here is an 87-residue protein sequence, read N- to C-terminus: Cell division topological specificity factor (87 aa).

The protein belongs to the MinE family.

In terms of biological role, prevents the cell division inhibition by proteins MinC and MinD at internal division sites while permitting inhibition at polar sites. This ensures cell division at the proper site by restricting the formation of a division septum at the midpoint of the long axis of the cell. The polypeptide is Cell division topological specificity factor (Blochmanniella pennsylvanica (strain BPEN)).